Here is a 228-residue protein sequence, read N- to C-terminus: MERECGSKELFSKEELQEISGVHVGDDYVEVMCGCTSHRYGDAVARLKIFSDGELQITCQCTPACLEDKLTPAAFEKHSERETSRNWRNNVWVFIEGDKVPLSKTVLLRYYNKALKNSNVSKVIHRDEFVGCSTCGKERRFRLRSRGECRMHHDAIAEPNWKCCDYPYDKITCEEEEERGSRKVFRGCTRSPSCKGCTSCVCFGCKLCRFSDCNCQTCLDFTTNAKPI.

One can recognise an SAND domain in the interval 14-121 (EELQEISGVH…NKALKNSNVS (108 aa)).

Expressed in influorescence, pollen and siliques, with a higher expression in influorescence.

Its subcellular location is the cytoplasm. The protein localises to the nucleus. Putative transcription factor that acts as a key negative regulator of cell accumulation in shoot and floral meristems. Negatively regulates the size of the WUSCHEL (WUS)-expressing organizing center in inflorescence meristems. May act by down-regulating expression of WUS. Can compensate for mutant ULT1 protein when overexpressed. This is Protein ULTRAPETALA 2 (ULT2) from Arabidopsis thaliana (Mouse-ear cress).